The primary structure comprises 141 residues: Hemoglobin subunit alpha (141 aa).

Residues 1–141 (VLSPADKTNI…VSTVLTSKYR (141 aa)) enclose the Globin domain. A Phosphoserine modification is found at Ser-3. Lys-7 is modified (N6-succinyllysine). Thr-8 carries the post-translational modification Phosphothreonine. Position 11 is an N6-succinyllysine (Lys-11). Lys-16 is subject to N6-acetyllysine; alternate. Position 16 is an N6-succinyllysine; alternate (Lys-16). Position 24 is a phosphotyrosine (Tyr-24). Ser-35 is modified (phosphoserine). Residue Lys-40 is modified to N6-succinyllysine. At Ser-49 the chain carries Phosphoserine. His-58 provides a ligand contact to O2. His-87 lines the heme b pocket. The residue at position 102 (Ser-102) is a Phosphoserine. Residue Thr-108 is modified to Phosphothreonine. The residue at position 124 (Ser-124) is a Phosphoserine. A phosphothreonine mark is found at Thr-134 and Thr-137. Ser-138 carries the post-translational modification Phosphoserine.

Belongs to the globin family. In terms of assembly, heterotetramer of two alpha chains and two beta chains. In terms of tissue distribution, red blood cells.

In terms of biological role, involved in oxygen transport from the lung to the various peripheral tissues. Functionally, hemopressin acts as an antagonist peptide of the cannabinoid receptor CNR1. Hemopressin-binding efficiently blocks cannabinoid receptor CNR1 and subsequent signaling. This is Hemoglobin subunit alpha (HBA) from Canis lupus familiaris (Dog).